We begin with the raw amino-acid sequence, 344 residues long: Arginine N-succinyltransferase (344 aa).

Leu-125 contributes to the succinyl-CoA binding site. His-229 serves as the catalytic Proton donor.

It belongs to the arginine N-succinyltransferase family.

The catalysed reaction is succinyl-CoA + L-arginine = N(2)-succinyl-L-arginine + CoA + H(+). The protein operates within amino-acid degradation; L-arginine degradation via AST pathway; L-glutamate and succinate from L-arginine: step 1/5. Its function is as follows. Catalyzes the transfer of succinyl-CoA to arginine to produce N(2)-succinylarginine. This chain is Arginine N-succinyltransferase, found in Escherichia coli O6:K15:H31 (strain 536 / UPEC).